Consider the following 367-residue polypeptide: UDP-N-acetylglucosamine--N-acetylmuramyl-(pentapeptide) pyrophosphoryl-undecaprenol N-acetylglucosamine transferase (367 aa).

UDP-N-acetyl-alpha-D-glucosamine-binding positions include 15 to 17, asparagine 127, arginine 163, serine 191, isoleucine 249, and glutamine 294; that span reads TGG.

It belongs to the glycosyltransferase 28 family. MurG subfamily.

The protein localises to the cell inner membrane. The catalysed reaction is di-trans,octa-cis-undecaprenyl diphospho-N-acetyl-alpha-D-muramoyl-L-alanyl-D-glutamyl-meso-2,6-diaminopimeloyl-D-alanyl-D-alanine + UDP-N-acetyl-alpha-D-glucosamine = di-trans,octa-cis-undecaprenyl diphospho-[N-acetyl-alpha-D-glucosaminyl-(1-&gt;4)]-N-acetyl-alpha-D-muramoyl-L-alanyl-D-glutamyl-meso-2,6-diaminopimeloyl-D-alanyl-D-alanine + UDP + H(+). The protein operates within cell wall biogenesis; peptidoglycan biosynthesis. Cell wall formation. Catalyzes the transfer of a GlcNAc subunit on undecaprenyl-pyrophosphoryl-MurNAc-pentapeptide (lipid intermediate I) to form undecaprenyl-pyrophosphoryl-MurNAc-(pentapeptide)GlcNAc (lipid intermediate II). This is UDP-N-acetylglucosamine--N-acetylmuramyl-(pentapeptide) pyrophosphoryl-undecaprenol N-acetylglucosamine transferase from Burkholderia thailandensis (strain ATCC 700388 / DSM 13276 / CCUG 48851 / CIP 106301 / E264).